The following is a 356-amino-acid chain: Ubiquitin-conjugating enzyme E2 variant 3 (356 aa).

Positions 1-83 are disordered; sequence MSDQPGTSRP…LEDLHNYHRE (83 aa). Over residues 18 to 32 the composition is skewed to polar residues; it reads PTKTATRRRARPIAI. Residues 63 to 76 are compositionally biased toward basic and acidic residues; that stretch reads QPRKTVPKNVPLED. The UBC core domain maps to 169–324; sequence DIITEFMNRS…AREFVMKMAG (156 aa).

This sequence belongs to the ubiquitin-conjugating enzyme family. May interact with pmk-3. In terms of tissue distribution, expressed ubiquitously.

It is found in the nucleus. Its subcellular location is the cytoplasm. It localises to the cell projection. The protein resides in the dendrite. The protein localises to the axon. It is found in the cilium. Its function is as follows. Possible negative regulator of polyubiquitination. May modulate the activity of the p38 MAP kinase pnk-3. May have a role in axon termination and synaptic transmission at motor and mechanosensory neurons. Plays a role in intraflagellar transport in cilia and cilium length regulation. In Caenorhabditis elegans, this protein is Ubiquitin-conjugating enzyme E2 variant 3.